The sequence spans 202 residues: Small ribosomal subunit protein uS4c (202 aa).

An S4 RNA-binding domain is found at methionine 90 to isoleucine 153.

This sequence belongs to the universal ribosomal protein uS4 family. In terms of assembly, part of the 30S ribosomal subunit. Contacts protein S5. The interaction surface between S4 and S5 is involved in control of translational fidelity.

The protein resides in the plastid. The protein localises to the chloroplast. Its function is as follows. One of the primary rRNA binding proteins, it binds directly to 16S rRNA where it nucleates assembly of the body of the 30S subunit. Functionally, with S5 and S12 plays an important role in translational accuracy. This Hylocomium splendens (Glittering wood-moss) protein is Small ribosomal subunit protein uS4c (rps4).